A 630-amino-acid polypeptide reads, in one-letter code: Elongation factor 4 (630 aa).

The segment at 1 to 22 (MTVARNRAGAGPGKGSPISSFA) is disordered. The region spanning 30-211 (ARIRNFCIIA…EVVRQVPAPV (182 aa)) is the tr-type G domain. GTP contacts are provided by residues 42-47 (DHGKST) and 158-161 (NKID).

Belongs to the TRAFAC class translation factor GTPase superfamily. Classic translation factor GTPase family. LepA subfamily.

It is found in the cell membrane. It carries out the reaction GTP + H2O = GDP + phosphate + H(+). Its function is as follows. Required for accurate and efficient protein synthesis under certain stress conditions. May act as a fidelity factor of the translation reaction, by catalyzing a one-codon backward translocation of tRNAs on improperly translocated ribosomes. Back-translocation proceeds from a post-translocation (POST) complex to a pre-translocation (PRE) complex, thus giving elongation factor G a second chance to translocate the tRNAs correctly. Binds to ribosomes in a GTP-dependent manner. The sequence is that of Elongation factor 4 from Rhodococcus opacus (strain B4).